Reading from the N-terminus, the 429-residue chain is Adenylosuccinate synthetase (429 aa).

Residues 12–18 (GDEGKGK) and 40–42 (GHT) contribute to the GTP site. D13 serves as the catalytic Proton acceptor. Residues D13 and G40 each coordinate Mg(2+). IMP-binding positions include 13–16 (DEGK), 38–41 (NAGH), T128, R142, Q223, T238, and R302. H41 serves as the catalytic Proton donor. Position 298 to 304 (298 to 304 (VNTGRKR)) interacts with substrate. GTP contacts are provided by residues R304, 330 to 332 (KLD), and 412 to 414 (GVG).

This sequence belongs to the adenylosuccinate synthetase family. Homodimer. Mg(2+) serves as cofactor.

Its subcellular location is the cytoplasm. The catalysed reaction is IMP + L-aspartate + GTP = N(6)-(1,2-dicarboxyethyl)-AMP + GDP + phosphate + 2 H(+). It functions in the pathway purine metabolism; AMP biosynthesis via de novo pathway; AMP from IMP: step 1/2. Functionally, plays an important role in the de novo pathway of purine nucleotide biosynthesis. Catalyzes the first committed step in the biosynthesis of AMP from IMP. The sequence is that of Adenylosuccinate synthetase from Corynebacterium diphtheriae (strain ATCC 700971 / NCTC 13129 / Biotype gravis).